Consider the following 88-residue polypeptide: Small ribosomal subunit protein uS17 (88 aa).

This sequence belongs to the universal ribosomal protein uS17 family. In terms of assembly, part of the 30S ribosomal subunit.

In terms of biological role, one of the primary rRNA binding proteins, it binds specifically to the 5'-end of 16S ribosomal RNA. In Nitratidesulfovibrio vulgaris (strain ATCC 29579 / DSM 644 / CCUG 34227 / NCIMB 8303 / VKM B-1760 / Hildenborough) (Desulfovibrio vulgaris), this protein is Small ribosomal subunit protein uS17.